We begin with the raw amino-acid sequence, 633 residues long: Uracil permease (633 aa).

The next 12 helical transmembrane spans lie at 143 to 163, 173 to 193, 197 to 217, 242 to 262, 268 to 288, 310 to 330, 350 to 370, 400 to 420, 442 to 462, 465 to 485, 521 to 541, and 559 to 579; these read WWQC…FVVL, LSFP…WPVI, VMAI…VSLM, YEFM…LVPP, LFTV…IWAI, FSWA…TMVI, LVCI…VTAA, AGVF…NISA, GSLF…MATS, FTMA…VVCS, ALAA…AEVG, and YWVG…FFPV.

Belongs to the purine-cytosine permease (2.A.39) family. Post-translationally, glycosylated (possible); but there is not yet direct biochemical evidence for it.

The protein localises to the membrane. Its function is as follows. Transport of uracil. This chain is Uracil permease (FUR4), found in Saccharomyces cerevisiae (strain ATCC 204508 / S288c) (Baker's yeast).